A 281-amino-acid chain; its full sequence is Light-independent protochlorophyllide reductase iron-sulfur ATP-binding protein (281 aa).

Residues 10 to 15 (GIGKST) and Lys39 each bind ATP. Ser14 contacts Mg(2+). [4Fe-4S] cluster-binding residues include Cys95 and Cys129. 180 to 181 (NR) contributes to the ATP binding site.

It belongs to the NifH/BchL/ChlL family. As to quaternary structure, homodimer. Protochlorophyllide reductase is composed of three subunits; ChlL, ChlN and ChlB. It depends on [4Fe-4S] cluster as a cofactor.

The enzyme catalyses chlorophyllide a + oxidized 2[4Fe-4S]-[ferredoxin] + 2 ADP + 2 phosphate = protochlorophyllide a + reduced 2[4Fe-4S]-[ferredoxin] + 2 ATP + 2 H2O. Its pathway is porphyrin-containing compound metabolism; chlorophyll biosynthesis (light-independent). Its function is as follows. Component of the dark-operative protochlorophyllide reductase (DPOR) that uses Mg-ATP and reduced ferredoxin to reduce ring D of protochlorophyllide (Pchlide) to form chlorophyllide a (Chlide). This reaction is light-independent. The L component serves as a unique electron donor to the NB-component of the complex, and binds Mg-ATP. This chain is Light-independent protochlorophyllide reductase iron-sulfur ATP-binding protein, found in Thermosynechococcus vestitus (strain NIES-2133 / IAM M-273 / BP-1).